A 160-amino-acid polypeptide reads, in one-letter code: Cyanate hydratase (160 aa).

Active-site residues include Arg100, Glu103, and Ser126.

Belongs to the cyanase family.

The enzyme catalyses cyanate + hydrogencarbonate + 3 H(+) = NH4(+) + 2 CO2. Functionally, catalyzes the reaction of cyanate with bicarbonate to produce ammonia and carbon dioxide. This Aspergillus flavus (strain ATCC 200026 / FGSC A1120 / IAM 13836 / NRRL 3357 / JCM 12722 / SRRC 167) protein is Cyanate hydratase.